The sequence spans 390 residues: Neutrophil cytosol factor 1 (390 aa).

Positions 4 to 125 (TFIRHIALLG…DFFKVRPDDL (122 aa)) constitute a PX domain. 2 consecutive SH3 domains span residues 156–215 (IILQ…PLDS) and 226–285 (YAGE…KAGE). The interval 291-390 (QRQIRGRGAP…STKRKLTSAV (100 aa)) is disordered. Ser-304, Ser-321, Ser-329, and Ser-346 each carry phosphoserine. The segment covering 374–383 (ILHRCTESTK) has biased composition (basic and acidic residues).

As to quaternary structure, component of the phagocyte NADPH oxidase complex composed of an obligatory core heterodimer formed by the membrane proteins CYBA and CYBB and the cytosolic regulatory subunits NCF1/p47-phox, NCF2/p67-phox, NCF4/p40-phox and the small GTPase RAC1 or RAC2. Part of a cytosolic complex composed at least by NCF1, NCF2 and NCF4. Interacts (via C-terminus) with NCF2 (via the C-terminal SH3 domain). Interacts with NCF4. Interacts with CYBB. Interacts (via the second SH3 domain) with CYBA; interaction is phosphorylation-dependent. Interacts with NOXA1. Interacts with ADAM15. Interacts with TRAF4. Interacts with FASLG. Interacts with PARK7 (via C-terminus); the interaction is enhanced by LPS and modulates NCF1 phosphorylation and membrane translocation. Post-translationally, phosphorylated by PRKCD; phosphorylation induces activation of NCF1, leading to assembly and activation of the NADPH oxidase complex.

The protein resides in the cytoplasm. Its subcellular location is the cytosol. It localises to the membrane. Functionally, subunit of the phagocyte NADPH oxidase complex that mediates the transfer of electrons from cytosolic NADPH to O2 to produce the superoxide anion (O2(-)). In the activated complex, electrons are first transferred from NADPH to flavin adenine dinucleotide (FAD) and subsequently transferred via two heme molecules to molecular oxygen, producing superoxide through an outer-sphere reaction. Activation of the NADPH oxidase complex is initiated by the assembly of cytosolic subunits of the NADPH oxidase complex with the core NADPH oxidase complex to form a complex at the plasma membrane or phagosomal membrane. This activation process is initiated by phosphorylation dependent binding of the cytosolic NCF1/p47-phox subunit to the C-terminus of CYBA/p22-phox. The sequence is that of Neutrophil cytosol factor 1 from Mus musculus (Mouse).